The chain runs to 143 residues: Sirohydrochlorin cobaltochelatase (143 aa).

His-18 (proton acceptor) is an active-site residue. Residue His-18 participates in Co(2+) binding. His-18 contacts Ni(2+). Substrate contacts are provided by residues Arg-53 and 78 to 83; that span reads LAHGVH. Co(2+) is bound at residue His-83. His-83 contributes to the Ni(2+) binding site.

Belongs to the CbiX family. CbiXS subfamily. Homotetramer; dimer of dimers.

It catalyses the reaction Co-sirohydrochlorin + 2 H(+) = sirohydrochlorin + Co(2+). The catalysed reaction is Ni-sirohydrochlorin + 2 H(+) = sirohydrochlorin + Ni(2+). Its pathway is cofactor biosynthesis; adenosylcobalamin biosynthesis; cob(II)yrinate a,c-diamide from sirohydrochlorin (anaerobic route): step 1/10. Its function is as follows. Catalyzes the insertion of Co(2+) into sirohydrochlorin as part of the anaerobic pathway to cobalamin biosynthesis. Involved in the biosynthesis of the unique nickel-containing tetrapyrrole coenzyme F430, the prosthetic group of methyl-coenzyme M reductase (MCR), which plays a key role in methanogenesis and anaerobic methane oxidation (Potential). Catalyzes the insertion of Ni(2+) into sirohydrochlorin to yield Ni-sirohydrochlorin (Potential). The chain is Sirohydrochlorin cobaltochelatase from Methanothermobacter thermautotrophicus (strain ATCC 29096 / DSM 1053 / JCM 10044 / NBRC 100330 / Delta H) (Methanobacterium thermoautotrophicum).